Reading from the N-terminus, the 357-residue chain is S-adenosyl-L-methionine:benzoic acid/salicylic acid carboxyl methyltransferase 3 (357 aa).

Tyrosine 18 contacts S-adenosyl-L-homocysteine. Glutamine 25 contacts benzoate. S-adenosyl-L-homocysteine contacts are provided by cysteine 59, asparagine 64, aspartate 96, leucine 97, serine 135, and phenylalanine 136. Benzoate is bound at residue tryptophan 157. Asparagine 168, aspartate 254, phenylalanine 256, and asparagine 257 together coordinate Mg(2+). Position 260 (glutamine 260) interacts with benzoate.

Belongs to the methyltransferase superfamily. Type-7 methyltransferase family.

The enzyme catalyses benzoate + S-adenosyl-L-methionine = methyl benzoate + S-adenosyl-L-homocysteine. It functions in the pathway aromatic compound metabolism. Its function is as follows. Converts benzoic acid into the volatile ester methyl benzoates. This scent, mostly produced in a rhythmical, diurnal manner, attracts the pollinators. This is S-adenosyl-L-methionine:benzoic acid/salicylic acid carboxyl methyltransferase 3 from Petunia hybrida (Petunia).